Here is a 590-residue protein sequence, read N- to C-terminus: Aspartate--tRNA(Asp/Asn) ligase (590 aa).

Glutamate 170 is an L-aspartate binding site. The tract at residues 194–197 is aspartate; sequence QLFK. Arginine 216 lines the L-aspartate pocket. ATP contacts are provided by residues 216-218 and glutamine 225; that span reads RDE. Histidine 448 lines the L-aspartate pocket. Glutamate 482 contributes to the ATP binding site. Position 489 (arginine 489) interacts with L-aspartate. 534 to 537 serves as a coordination point for ATP; the sequence is GWDR. Residues 559–590 are disordered; it reads GGVDPLTEAPAPITAQQRKESGIDAKPGKDGA. Residues 575-590 are compositionally biased toward basic and acidic residues; the sequence is QRKESGIDAKPGKDGA.

Belongs to the class-II aminoacyl-tRNA synthetase family. Type 1 subfamily. In terms of assembly, homodimer.

The protein resides in the cytoplasm. It carries out the reaction tRNA(Asx) + L-aspartate + ATP = L-aspartyl-tRNA(Asx) + AMP + diphosphate. Functionally, aspartyl-tRNA synthetase with relaxed tRNA specificity since it is able to aspartylate not only its cognate tRNA(Asp) but also tRNA(Asn). Reaction proceeds in two steps: L-aspartate is first activated by ATP to form Asp-AMP and then transferred to the acceptor end of tRNA(Asp/Asn). The sequence is that of Aspartate--tRNA(Asp/Asn) ligase from Mycolicibacterium gilvum (strain PYR-GCK) (Mycobacterium gilvum (strain PYR-GCK)).